A 916-amino-acid chain; its full sequence is Protein translocase subunit SecA (916 aa).

ATP contacts are provided by residues Q87, 105–109 (GEGKT), and D507. Zn(2+) is bound by residues C900, C902, C911, and H912.

The protein belongs to the SecA family. As to quaternary structure, monomer and homodimer. Part of the essential Sec protein translocation apparatus which comprises SecA, SecYEG and auxiliary proteins SecDF-YajC and YidC. The cofactor is Zn(2+).

The protein localises to the cell inner membrane. It is found in the cytoplasm. It catalyses the reaction ATP + H2O + cellular proteinSide 1 = ADP + phosphate + cellular proteinSide 2.. In terms of biological role, part of the Sec protein translocase complex. Interacts with the SecYEG preprotein conducting channel. Has a central role in coupling the hydrolysis of ATP to the transfer of proteins into and across the cell membrane, serving both as a receptor for the preprotein-SecB complex and as an ATP-driven molecular motor driving the stepwise translocation of polypeptide chains across the membrane. This is Protein translocase subunit SecA from Neisseria meningitidis serogroup C / serotype 2a (strain ATCC 700532 / DSM 15464 / FAM18).